We begin with the raw amino-acid sequence, 107 residues long: Nucleoid-associated protein RF_1365 (107 aa).

Belongs to the YbaB/EbfC family. Homodimer.

The protein resides in the cytoplasm. It localises to the nucleoid. Functionally, binds to DNA and alters its conformation. May be involved in regulation of gene expression, nucleoid organization and DNA protection. The sequence is that of Nucleoid-associated protein RF_1365 from Rickettsia felis (strain ATCC VR-1525 / URRWXCal2) (Rickettsia azadi).